The following is an 87-amino-acid chain: Large ribosomal subunit protein bL28 (87 aa).

This sequence belongs to the bacterial ribosomal protein bL28 family.

This chain is Large ribosomal subunit protein bL28, found in Akkermansia muciniphila (strain ATCC BAA-835 / DSM 22959 / JCM 33894 / BCRC 81048 / CCUG 64013 / CIP 107961 / Muc).